The chain runs to 341 residues: tRNA N6-adenosine threonylcarbamoyltransferase (341 aa).

Positions 115 and 119 each coordinate Fe cation. Residues 137–141 (IVSGG), D170, G183, D187, and N276 contribute to the substrate site. D304 lines the Fe cation pocket.

It belongs to the KAE1 / TsaD family. It depends on Fe(2+) as a cofactor.

It is found in the cytoplasm. The catalysed reaction is L-threonylcarbamoyladenylate + adenosine(37) in tRNA = N(6)-L-threonylcarbamoyladenosine(37) in tRNA + AMP + H(+). In terms of biological role, required for the formation of a threonylcarbamoyl group on adenosine at position 37 (t(6)A37) in tRNAs that read codons beginning with adenine. Is involved in the transfer of the threonylcarbamoyl moiety of threonylcarbamoyl-AMP (TC-AMP) to the N6 group of A37, together with TsaE and TsaB. TsaD likely plays a direct catalytic role in this reaction. The chain is tRNA N6-adenosine threonylcarbamoyltransferase from Staphylococcus aureus (strain USA300).